The sequence spans 343 residues: Methionine import ATP-binding protein MetN (343 aa).

Residues 2 to 241 (IKLSNITKVF…PKTPLAQKFI (240 aa)) form the ABC transporter domain. 38–45 (GASGAGKS) lines the ATP pocket.

The protein belongs to the ABC transporter superfamily. Methionine importer (TC 3.A.1.24) family. The complex is composed of two ATP-binding proteins (MetN), two transmembrane proteins (MetI) and a solute-binding protein (MetQ).

It is found in the cell inner membrane. It catalyses the reaction L-methionine(out) + ATP + H2O = L-methionine(in) + ADP + phosphate + H(+). The enzyme catalyses D-methionine(out) + ATP + H2O = D-methionine(in) + ADP + phosphate + H(+). Its function is as follows. Part of the ABC transporter complex MetNIQ involved in methionine import. Responsible for energy coupling to the transport system. This is Methionine import ATP-binding protein MetN from Shigella flexneri serotype 5b (strain 8401).